A 286-amino-acid polypeptide reads, in one-letter code: NADPH-dependent 7-cyano-7-deazaguanine reductase (286 aa).

Residue 92-94 coordinates substrate; it reads IES. 94–95 provides a ligand contact to NADPH; the sequence is SK. The active-site Thioimide intermediate is Cys194. The active-site Proton donor is Asp201. 233 to 234 contacts substrate; sequence HE. Residue 262 to 263 coordinates NADPH; it reads RG.

It belongs to the GTP cyclohydrolase I family. QueF type 2 subfamily. As to quaternary structure, homodimer.

The protein resides in the cytoplasm. The catalysed reaction is 7-aminomethyl-7-carbaguanine + 2 NADP(+) = 7-cyano-7-deazaguanine + 2 NADPH + 3 H(+). Its pathway is tRNA modification; tRNA-queuosine biosynthesis. In terms of biological role, catalyzes the NADPH-dependent reduction of 7-cyano-7-deazaguanine (preQ0) to 7-aminomethyl-7-deazaguanine (preQ1). This chain is NADPH-dependent 7-cyano-7-deazaguanine reductase, found in Shewanella sp. (strain MR-7).